The chain runs to 378 residues: Succinyl-diaminopimelate desuccinylase (378 aa).

H68 contributes to the Zn(2+) binding site. D70 is an active-site residue. D101 lines the Zn(2+) pocket. E135 acts as the Proton acceptor in catalysis. Zn(2+)-binding residues include E136, E164, and H350.

The protein belongs to the peptidase M20A family. DapE subfamily. As to quaternary structure, homodimer. Requires Zn(2+) as cofactor. Co(2+) is required as a cofactor.

The enzyme catalyses N-succinyl-(2S,6S)-2,6-diaminopimelate + H2O = (2S,6S)-2,6-diaminopimelate + succinate. The protein operates within amino-acid biosynthesis; L-lysine biosynthesis via DAP pathway; LL-2,6-diaminopimelate from (S)-tetrahydrodipicolinate (succinylase route): step 3/3. Catalyzes the hydrolysis of N-succinyl-L,L-diaminopimelic acid (SDAP), forming succinate and LL-2,6-diaminopimelate (DAP), an intermediate involved in the bacterial biosynthesis of lysine and meso-diaminopimelic acid, an essential component of bacterial cell walls. The protein is Succinyl-diaminopimelate desuccinylase of Vibrio campbellii (strain ATCC BAA-1116).